Reading from the N-terminus, the 270-residue chain is Interleukin-1 alpha (270 aa).

Positions 1 to 112 are excised as a propeptide; that stretch reads MAKVPDLFED…EVEEEIMKPR (112 aa). Lys82 bears the N6-acetyllysine mark. The interval 82–86 is nuclear localization signal (NLS); the sequence is KKRRL. Residue Ser87 is modified to Phosphoserine. A glycan (N-linked (GlcNAc...) asparagine) is linked at Asn139.

Belongs to the IL-1 family. As to quaternary structure, monomer. Interacts with TMED10; the interaction mediates the translocation from the cytoplasm into the ERGIC (endoplasmic reticulum-Golgi intermediate compartment) and thereby secretion. Interacts with IL1R1. Interacts with S100A13; this interaction is the first step in the export of IL1A, followed by direct translocation of this complex across the plasma membrane. Acetylated within its nuclear localization sequence, which impacts subcellular localization. In terms of processing, proteolytic processed by CAPN1 in a calcium-dependent manner. Cleavage from 31 kDa precursor to 18 kDa biologically active molecules. Post-translationally, phosphorylated. Phosphorylation greatly enhances susceptibility to digestion and promotes the conversion of pre-IL1A alpha to the biologically active IL1A.

The protein resides in the nucleus. It localises to the cytoplasm. The protein localises to the secreted. Its function is as follows. Cytokine constitutively present intracellularly in nearly all resting non-hematopoietic cells that plays an important role in inflammation and bridges the innate and adaptive immune systems. After binding to its receptor IL1R1 together with its accessory protein IL1RAP, forms the high affinity interleukin-1 receptor complex. Signaling involves the recruitment of adapter molecules such as MYD88, IRAK1 or IRAK4. In turn, mediates the activation of NF-kappa-B and the three MAPK pathways p38, p42/p44 and JNK pathways. Within the cell, acts as an alarmin and cell death results in its liberation in the extracellular space after disruption of the cell membrane to induce inflammation and alert the host to injury or damage. In addition to its role as a danger signal, which occurs when the cytokine is passively released by cell necrosis, directly senses DNA damage and acts as signal for genotoxic stress without loss of cell integrity. The protein is Interleukin-1 alpha (IL1A) of Felis catus (Cat).